We begin with the raw amino-acid sequence, 436 residues long: 3-ketoacyl-CoA thiolase (436 aa).

The active-site Acyl-thioester intermediate is cysteine 99. Active-site proton acceptor residues include histidine 392 and cysteine 422.

It belongs to the thiolase-like superfamily. Thiolase family. As to quaternary structure, heterotetramer of two alpha chains (FadJ) and two beta chains (FadI).

It is found in the cytoplasm. It carries out the reaction an acyl-CoA + acetyl-CoA = a 3-oxoacyl-CoA + CoA. It participates in lipid metabolism; fatty acid beta-oxidation. Catalyzes the final step of fatty acid oxidation in which acetyl-CoA is released and the CoA ester of a fatty acid two carbons shorter is formed. The sequence is that of 3-ketoacyl-CoA thiolase from Escherichia coli O157:H7.